The primary structure comprises 157 residues: uncharacterized protein (157 aa).

The N-acetyltransferase domain occupies 9 to 146 (LLINYKTLDE…GDFYVWHPET (138 aa)).

This is an uncharacterized protein from Bacillus anthracis (strain CDC 684 / NRRL 3495).